A 188-amino-acid polypeptide reads, in one-letter code: MSLERIVERLETEKRTKIEEIKNKKEKEFQEFVAKKEKELEEWKEKQKRSLKEKLNREENTLAAQLKLKYNAEKLRIESDAIAKVKNLVLERLKSSSNEVYNKIWENLLERESIKSGEMILTKNEDKIDVDYFCKKYSLTLSKDRMEGNGGFVIQKDNLVIDLTVDTIIEELVNKNILEIAQILHGER.

It belongs to the V-ATPase E subunit family.

In terms of biological role, produces ATP from ADP in the presence of a proton gradient across the membrane. This Dictyoglomus thermophilum (strain ATCC 35947 / DSM 3960 / H-6-12) protein is V-type proton ATPase subunit E.